We begin with the raw amino-acid sequence, 1050 residues long: Self-sufficient cytochrome P450 monooxygenase CYP505E5 (1050 aa).

A heme-binding site is contributed by C405. A disordered region spans residues 467 to 491 (RRSMLVARDGSSGESSNHLAEARGD). The Flavodoxin-like domain maps to 500–641 (VSFFYGSNSG…DLEAWEETSL (142 aa)). FMN is bound by residues 506–510 (SNSGT) and 585–617 (VFGC…TRLA). The FAD-binding FR-type domain maps to 679 to 907 (KGLIEAKVTA…RPAKESFHLP (229 aa)).

This sequence in the N-terminal section; belongs to the cytochrome P450 family. The cofactor is FAD. FMN is required as a cofactor. It depends on heme as a cofactor.

It catalyses the reaction 2 oxidized [cytochrome P450] + NADPH = 2 reduced [cytochrome P450] + NADP(+) + H(+). The enzyme catalyses an organic molecule + reduced [NADPH--hemoprotein reductase] + O2 = an alcohol + oxidized [NADPH--hemoprotein reductase] + H2O + H(+). The catalysed reaction is dodecanoate + reduced [NADPH--hemoprotein reductase] + O2 = 5-hydroxydodecanoate + oxidized [NADPH--hemoprotein reductase] + H2O + H(+). It carries out the reaction tetradecanoate + reduced [NADPH--hemoprotein reductase] + O2 = 7-hydroxytetradecanoate + oxidized [NADPH--hemoprotein reductase] + H2O + H(+). It catalyses the reaction dodecan-1-ol + reduced [NADPH--hemoprotein reductase] + O2 = 1,5-dodecanediol + oxidized [NADPH--hemoprotein reductase] + H2O + H(+). The enzyme catalyses dodecan-1-ol + reduced [NADPH--hemoprotein reductase] + O2 = 1,4-dodecanediol + oxidized [NADPH--hemoprotein reductase] + H2O + H(+). The catalysed reaction is dodecan-1-ol + reduced [NADPH--hemoprotein reductase] + O2 = 1,6-dodecanediol + oxidized [NADPH--hemoprotein reductase] + H2O + H(+). Self-sufficient cytochrome P450 monooxygenase that catalyzes the regioselective in-chain hydroxylation of alkanes, fatty alcohols, and fatty acids at the omega-7 position. Performs hydroxylation of C10-C16 n-alkanes and C12 and C14 fatty alcohols; and thereby enables the one step biocatalytic synthesis of rare alcohols such as 5-dodecanol and 7-tetradecanol. Converts 1-dodecanol into 1,5-dodecanediol as major product with very little sub-terminally hydroxylated products with the 1,4-dodecanediol and 1,6-dodecanediol more abundant. Converts dodecanoic acid to 5-hydroxydodecanoic acid which can be further converted into delta-dodecalactone by lactonization of the 5-hydroxy acid at low pH. Also gives sub-terminal hydroxylation of dodecanoic acid with 9-hydroxydodecanoic acid being the second most abundant product. This Aspergillus niger protein is Self-sufficient cytochrome P450 monooxygenase CYP505E5.